The primary structure comprises 209 residues: Large ribosomal subunit protein uL3 (209 aa).

This sequence belongs to the universal ribosomal protein uL3 family. As to quaternary structure, part of the 50S ribosomal subunit. Forms a cluster with proteins L14 and L19.

In terms of biological role, one of the primary rRNA binding proteins, it binds directly near the 3'-end of the 23S rRNA, where it nucleates assembly of the 50S subunit. The chain is Large ribosomal subunit protein uL3 from Clostridium tetani (strain Massachusetts / E88).